Here is a 492-residue protein sequence, read N- to C-terminus: GPI alpha-1,6-mannosyltransferase 2 (492 aa).

Residues Met1–Lys13 are Cytoplasmic-facing. A helical membrane pass occupies residues Phe14–Pro34. Over Asp35–His77 the chain is Lumenal. The chain crosses the membrane as a helical span at residues Gly78–Gly98. At Thr99–Ser113 the chain is on the cytoplasmic side. A helical transmembrane segment spans residues Cys114–Leu134. Topologically, residues His135–Asp136 are lumenal. Residues Leu137 to Leu157 form a helical membrane-spanning segment. Topologically, residues Ser158–Asn161 are cytoplasmic. The helical transmembrane segment at Val162 to Gly182 threads the bilayer. Residues Gln183–Ser192 are Lumenal-facing. The chain crosses the membrane as a helical span at residues Gly193–Leu213. Residues Leu214–Leu234 are Cytoplasmic-facing. The helical transmembrane segment at Val235–Phe255 threads the bilayer. Topologically, residues Gln256–Asn327 are lumenal. The chain crosses the membrane as a helical span at residues Phe328–Ala348. The Cytoplasmic segment spans residues His349–Lys378. The helical transmembrane segment at Val379–Val399 threads the bilayer. The Lumenal segment spans residues Gln400 to Lys468. A helical transmembrane segment spans residues Cys469–Leu489. The Cytoplasmic segment spans residues Pro490–Thr492.

Belongs to the PIGV family. Post-translationally, not N-glycosylated.

The protein localises to the endoplasmic reticulum membrane. Its pathway is glycolipid biosynthesis; glycosylphosphatidylinositol-anchor biosynthesis. Its function is as follows. Alpha-1,6-mannosyltransferase that catalyzes the transfer of the second mannose, via an alpha-1,6 bond, from a dolichol-phosphate-mannose (Dol-P-Man) to the alpha-D-Man-(1-&gt;4)-alpha-D-GlcN-(1-&gt;6)-(1-radyl,2-acyl-sn-glycero-3-phospho)-2-acyl-inositol (also termed H2) intermediate to generate an alpha-D-Man-(1-&gt;6)-alpha-D-Man-(1-&gt;4)-alpha-D-GlcN-(1-&gt;6)-(1-radyl,2-acyl-sn-glycero-3-phospho)-2-acyl-inositol (also termed H3) and participates in the seventh step of the glycosylphosphatidylinositol-anchor biosynthesis. Also transfers the second mannose on a 2-PEtn-alpha-D-Man-(1-&gt;4)-alpha-D-GlcN-(1-&gt;6)-(1-radyl,2-acyl-sn-glycero-3-phospho)-2-acyl-inositol (also termed H5). This chain is GPI alpha-1,6-mannosyltransferase 2, found in Rattus norvegicus (Rat).